We begin with the raw amino-acid sequence, 151 residues long: Lipoprotein signal peptidase (151 aa).

Helical transmembrane passes span 61–81 (GSQW…IWIG) and 88–107 (SRWQ…GNGI). Active-site residues include aspartate 117 and aspartate 133. Residues 128–148 (VFNLADVAINLAVLCLLIEAI) form a helical membrane-spanning segment.

Belongs to the peptidase A8 family.

The protein resides in the cell inner membrane. The catalysed reaction is Release of signal peptides from bacterial membrane prolipoproteins. Hydrolyzes -Xaa-Yaa-Zaa-|-(S,diacylglyceryl)Cys-, in which Xaa is hydrophobic (preferably Leu), and Yaa (Ala or Ser) and Zaa (Gly or Ala) have small, neutral side chains.. It participates in protein modification; lipoprotein biosynthesis (signal peptide cleavage). Functionally, this protein specifically catalyzes the removal of signal peptides from prolipoproteins. The chain is Lipoprotein signal peptidase from Synechococcus sp. (strain RCC307).